A 390-amino-acid chain; its full sequence is L-seryl-tRNA(Sec) selenium transferase (390 aa).

N6-(pyridoxal phosphate)lysine is present on Lys-225.

It belongs to the SelA family. Pyridoxal 5'-phosphate is required as a cofactor.

It is found in the cytoplasm. It carries out the reaction L-seryl-tRNA(Sec) + selenophosphate + H(+) = L-selenocysteinyl-tRNA(Sec) + phosphate. It participates in aminoacyl-tRNA biosynthesis; selenocysteinyl-tRNA(Sec) biosynthesis; selenocysteinyl-tRNA(Sec) from L-seryl-tRNA(Sec) (bacterial route): step 1/1. Its function is as follows. Converts seryl-tRNA(Sec) to selenocysteinyl-tRNA(Sec) required for selenoprotein biosynthesis. The polypeptide is L-seryl-tRNA(Sec) selenium transferase (Helicobacter pylori (strain P12)).